Reading from the N-terminus, the 213-residue chain is Serine acetyltransferase (213 aa).

Belongs to the transferase hexapeptide repeat family.

It is found in the cytoplasm. It catalyses the reaction L-serine + acetyl-CoA = O-acetyl-L-serine + CoA. Its pathway is amino-acid biosynthesis; L-cysteine biosynthesis; L-cysteine from L-serine: step 1/2. This Staphylococcus epidermidis (strain ATCC 35984 / DSM 28319 / BCRC 17069 / CCUG 31568 / BM 3577 / RP62A) protein is Serine acetyltransferase (cysE).